The primary structure comprises 162 residues: Lymphocyte antigen 86 (162 aa).

A signal peptide spans Met-1–Gly-20. Cystine bridges form between Cys-33–Cys-58, Cys-45–Cys-154, and Cys-102–Cys-112. A glycan (N-linked (GlcNAc...) asparagine) is linked at Asn-96. N-linked (GlcNAc...) asparagine glycosylation is present at Asn-156.

M-shaped tetramer of two CD180-LY86 heterodimers. Highly expressed in B-cells, monocytes and tonsil.

The protein localises to the secreted. The protein resides in the extracellular space. Its function is as follows. May cooperate with CD180 and TLR4 to mediate the innate immune response to bacterial lipopolysaccharide (LPS) and cytokine production. Important for efficient CD180 cell surface expression. The chain is Lymphocyte antigen 86 (LY86) from Homo sapiens (Human).